We begin with the raw amino-acid sequence, 173 residues long: RNA pyrophosphohydrolase (173 aa).

The Nudix hydrolase domain occupies 13 to 166; the sequence is PYRPCVGLMI…KRKVYEEVVA (154 aa). The short motif at 54 to 75 is the Nudix box element; sequence GGIDKGEEPLQAAERELYEETG.

This sequence belongs to the Nudix hydrolase family. RppH subfamily. The cofactor is a divalent metal cation.

Accelerates the degradation of transcripts by removing pyrophosphate from the 5'-end of triphosphorylated RNA, leading to a more labile monophosphorylated state that can stimulate subsequent ribonuclease cleavage. The sequence is that of RNA pyrophosphohydrolase from Mesorhizobium japonicum (strain LMG 29417 / CECT 9101 / MAFF 303099) (Mesorhizobium loti (strain MAFF 303099)).